We begin with the raw amino-acid sequence, 448 residues long: Keratin, type I cytoskeletal 27 (448 aa).

Positions Met1–Asn73 are head. The coil 1A stretch occupies residues Glu74–Trp109. The IF rod domain maps to Glu74–Cys389. Residues Tyr110–Ile131 form a linker 1 region. The coil 1B stretch occupies residues Ile132–Leu223. Positions Gln224–Leu246 are linker 12. Residues Leu247–Asp385 are coil 2. Residues Glu386–Ser448 form a tail region. The tract at residues Ser427–Ser448 is disordered. Residues His430 to Ser448 show a composition bias toward basic and acidic residues.

The protein belongs to the intermediate filament family. As to quaternary structure, heterotetramer of two type I and two type II keratins. Interacts with KRT6A to form filaments. Expressed in skin. Expressed in the Henle layer and cuticle of the irs in hair follicle bulb. In the hair follicle, expression was observed in all layers of the irs but was stronger in the Henle layer and cuticle than the Huxley layer until the Henle layer differentiated (at protein level).

It is found in the cytoplasm. Essential for the proper assembly of type I and type II keratin protein complexes and formation of keratin intermediate filaments in the inner root sheath (irs). The sequence is that of Keratin, type I cytoskeletal 27 from Mus musculus (Mouse).